A 629-amino-acid polypeptide reads, in one-letter code: MVALSTLSGLSALPFLFSLVQNVYGVSLEVSTEKGNSSSPILYGFMFEDINHSGDGGIYGQLLRNNGLQGSKPGLTAWAAVGDATIAVDAQNPLTEAIPHSLKLDVKQGASGAVGFTNEGYWGVPVDGSEFLNTFWIKGNFSGDITVRLVGNNTGTEYGSTKISQSSNSSNFTKVLAKIPTKKAPDGAVLYELTVDGASVGGSSLNFGLFELFPQTYKSRSNGLKPQVAQPLADMKGSFLRFPGGNNLEGASEARRWKWNETIGPVENRPGRQGDWSYYNTDGLGLDEYFYWCEDMGLTPVLGVWAGFALESGGNTPITGDALKPYIDDVLNELEYVLGDASTKYGSLRASYGRKEPWKLTMVEIGNEDMLGGGCESYVERFTAFYDAIHAAYPDLTIIASTDQSSCLPSKLPEGAWVDYHNYNTADNLVKQFSQFDNKDRSVPYFIGEYSCQQDNAWPFMQGSVAEAVYMIGIERNSDVVKMAAYAPLLQLVNSTQWTPNLIAFTQNPSTVIETTSYYVQQMFSVNRGDTIHNVTSDSAFGPVYWVASSADDKYYVKLANYGADTQEITVTISGKTGGKLTVLADSDPKAFNSDTQTLVTPSESDVKATNGKFTFTLPAWSVGVLAAH.

The first 25 residues, 1–25 (MVALSTLSGLSALPFLFSLVQNVYG), serve as a signal peptide directing secretion. 9 N-linked (GlcNAc...) asparagine glycosylation sites follow: N36, N51, N140, N152, N168, N171, N260, N494, and N534.

This sequence belongs to the glycosyl hydrolase 51 family.

The protein resides in the secreted. It catalyses the reaction Hydrolysis of terminal non-reducing alpha-L-arabinofuranoside residues in alpha-L-arabinosides.. The protein operates within glycan metabolism; L-arabinan degradation. Functionally, alpha-L-arabinofuranosidase involved in the degradation of arabinoxylan, a major component of plant hemicellulose. Acts only on small linear 1,5-alpha-linked L-arabinofuranosyl oligosaccharides. This is Probable alpha-L-arabinofuranosidase A (abfA) from Aspergillus flavus (strain ATCC 200026 / FGSC A1120 / IAM 13836 / NRRL 3357 / JCM 12722 / SRRC 167).